A 459-amino-acid chain; its full sequence is MSFRFNEAVFGDNSFNERIREKLSTALNSPSKKKLDILKSGIKVQKVDFPTIPQLEILDLDIITQPKSLAKGICKISCKDAMLRIQTVIESNLLLINEQDTPSFTMPQLINNGSFTIPITMTFSSIELEAITNIFVKNPGIGISFNDVDLDFKFDCSVKILQSTIERRLKESMHVVFKDVLPSLIFNTSQNWFTNRGESTSTIPGKREHHHQQTTMSRNVILDGSDFQELSPINMLRLSSIVSSRSTLSLHSTVMNSLSAIPGCLERQNLYRFISRMPSLNNYYSSQSFPQPKSSTVSSKQLVKPFYCSHNLLPKTVLDSSQYDLATITKIQSRLFDRSNSNDDNAKPRRRKIKCKKTRTPSNLQSQGEQAVDDSTAIETVTSTPVQTPIPELEEQSPPYLKTTVSIRDKYVIPEKISLNLDSKKDTSKKKPFYFIGLNSQEPSNNWKWGMEDSPPPYH.

In terms of domain architecture, SMP-LTD spans 1 to 190; that stretch reads MSFRFNEAVF…LPSLIFNTSQ (190 aa). A compositionally biased stretch (basic and acidic residues) spans 338 to 347; the sequence is RSNSNDDNAK. A disordered region spans residues 338–375; it reads RSNSNDDNAKPRRRKIKCKKTRTPSNLQSQGEQAVDDS. The span at 348-359 shows a compositional bias: basic residues; sequence PRRRKIKCKKTR.

It belongs to the MDM34 family. Component of the ER-mitochondria encounter structure (ERMES) or MDM complex, composed of MMM1, MDM10, MDM12 and MDM34. Post-translationally, ubiquitinated by a SCF (SKP1-CUL1-F-box protein) E3 ubiquitin-protein ligase complex containing the F-box protein MDM30. Ubiquitination is important for mitochondrial integrity.

It is found in the mitochondrion outer membrane. In terms of biological role, component of the ERMES/MDM complex, which serves as a molecular tether to connect the endoplasmic reticulum (ER) and mitochondria. Components of this complex are involved in the control of mitochondrial shape and protein biogenesis, and function in nonvesicular lipid trafficking between the ER and mitochondria. MDM34 is required for the interaction of the ER-resident membrane protein MMM1 and the outer mitochondrial membrane-resident beta-barrel protein MDM10. The polypeptide is Mitochondrial distribution and morphology protein 34 (Saccharomyces cerevisiae (strain YJM789) (Baker's yeast)).